Consider the following 557-residue polypeptide: Acetylcholine receptor subunit alpha-L1 (557 aa).

The signal sequence occupies residues M1–A23. Over N24–F244 the chain is Extracellular. N47 carries N-linked (GlcNAc...) asparagine glycosylation. 2 disulfide bridges follow: C151-C165 and C224-C225. N235 carries an N-linked (GlcNAc...) asparagine glycan. The next 3 helical transmembrane spans lie at Y245–L266, I274–I294, and Y308–V329. Over H330–G500 the chain is Cytoplasmic. A helical transmembrane segment spans residues F501–F523.

Belongs to the ligand-gated ion channel (TC 1.A.9) family. Acetylcholine receptor (TC 1.A.9.1) subfamily.

It is found in the postsynaptic cell membrane. The protein resides in the cell membrane. Its function is as follows. After binding acetylcholine, the AChR responds by an extensive change in conformation that affects all subunits and leads to opening of an ion-conducting channel across the plasma membrane. In Schistocerca gregaria (Desert locust), this protein is Acetylcholine receptor subunit alpha-L1.